Reading from the N-terminus, the 268-residue chain is Ribosomal RNA small subunit methyltransferase A (268 aa).

6 residues coordinate S-adenosyl-L-methionine: asparagine 19, leucine 21, glycine 46, glutamate 67, aspartate 92, and asparagine 113.

The protein belongs to the class I-like SAM-binding methyltransferase superfamily. rRNA adenine N(6)-methyltransferase family. RsmA subfamily.

It localises to the cytoplasm. It carries out the reaction adenosine(1518)/adenosine(1519) in 16S rRNA + 4 S-adenosyl-L-methionine = N(6)-dimethyladenosine(1518)/N(6)-dimethyladenosine(1519) in 16S rRNA + 4 S-adenosyl-L-homocysteine + 4 H(+). Functionally, specifically dimethylates two adjacent adenosines (A1518 and A1519) in the loop of a conserved hairpin near the 3'-end of 16S rRNA in the 30S particle. May play a critical role in biogenesis of 30S subunits. The sequence is that of Ribosomal RNA small subunit methyltransferase A from Tolumonas auensis (strain DSM 9187 / NBRC 110442 / TA 4).